The primary structure comprises 501 residues: Vitamin D 25-hydroxylase (501 aa).

The signal sequence occupies residues 1–26 (MWKLWRAEEGAAALGGALFLLLFALG). Ala-250 lines the substrate pocket. Cys-448 contacts heme.

This sequence belongs to the cytochrome P450 family. Homodimer. The cofactor is heme.

Its subcellular location is the endoplasmic reticulum membrane. The protein resides in the microsome membrane. The enzyme catalyses calciol + reduced [NADPH--hemoprotein reductase] + O2 = calcidiol + oxidized [NADPH--hemoprotein reductase] + H2O + H(+). The catalysed reaction is vitamin D2 + reduced [NADPH--hemoprotein reductase] + O2 = 25-hydroxyvitamin D2 + oxidized [NADPH--hemoprotein reductase] + H2O + H(+). It catalyses the reaction 1alpha-hydroxyvitamin D2 + reduced [NADPH--hemoprotein reductase] + O2 = 1alpha,25-dihydroxyvitamin D2 + oxidized [NADPH--hemoprotein reductase] + H2O + H(+). It carries out the reaction alfacalcidol + reduced [NADPH--hemoprotein reductase] + O2 = calcitriol + oxidized [NADPH--hemoprotein reductase] + H2O + H(+). Its pathway is hormone biosynthesis; vitamin D biosynthesis. Its function is as follows. A cytochrome P450 monooxygenase involved in activation of vitamin D precursors. Catalyzes hydroxylation at C-25 of both forms of vitamin D, vitamin D(2) and D(3) (calciol). Can metabolize vitamin D analogs/prodrugs 1alpha-hydroxyvitamin D(2) (doxercalciferol) and 1alpha-hydroxyvitamin D(3) (alfacalcidol) forming 25-hydroxy derivatives. Mechanistically, uses molecular oxygen inserting one oxygen atom into a substrate, and reducing the second into a water molecule, with two electrons provided by NADPH via cytochrome P450 reductase (CPR; NADPH-ferrihemoprotein reductase). This Homo sapiens (Human) protein is Vitamin D 25-hydroxylase (CYP2R1).